The chain runs to 534 residues: GMP synthase [glutamine-hydrolyzing] (534 aa).

One can recognise a Glutamine amidotransferase type-1 domain in the interval 4 to 202 (KILILDFGSQ…VLEIAKAQPD (199 aa)). Catalysis depends on Cys-81, which acts as the Nucleophile. Residues His-176 and Glu-178 contribute to the active site. A GMPS ATP-PPase domain is found at 203–402 (WVMKDHVAEA…LGLPHDMVYR (200 aa)). Position 230-236 (230-236 (SGGVDSS)) interacts with ATP.

In terms of assembly, homodimer.

It carries out the reaction XMP + L-glutamine + ATP + H2O = GMP + L-glutamate + AMP + diphosphate + 2 H(+). It participates in purine metabolism; GMP biosynthesis; GMP from XMP (L-Gln route): step 1/1. Its function is as follows. Catalyzes the synthesis of GMP from XMP. In Methylibium petroleiphilum (strain ATCC BAA-1232 / LMG 22953 / PM1), this protein is GMP synthase [glutamine-hydrolyzing].